A 3214-amino-acid polypeptide reads, in one-letter code: Ciliogenesis and planar polarity effector 1 (3214 aa).

2 consecutive transmembrane segments (helical) span residues 593-613 (KLML…LQFI) and 632-652 (AWVL…YWDM). 11 disordered regions span residues 1496–1523 (VGKK…ETPG), 1644–1667 (GNQS…PLQS), 1879–1991 (DGRH…HRAQ), 2047–2142 (FGES…FPPA), 2214–2241 (SLSD…SSHC), 2398–2440 (GITQ…ISND), 2491–2529 (GSHD…GHEP), 2622–2650 (TFQS…QSGE), 2824–2855 (VSLQ…HSSQ), 3037–3127 (TAPA…CRED), and 3158–3181 (MSPA…VSES). Basic and acidic residues predominate over residues 1512-1523 (NSQRKEDDETPG). Residues 1932–1942 (QCSRKEPRDAS) show a composition bias toward basic and acidic residues. Composition is skewed to polar residues over residues 1943-1953 (VDTNLTEQKGA), 1971-1984 (NGAQ…QKTQ), and 2047-2068 (FGES…SRQR). The span at 2079–2099 (CTREPGKNSPADHKRISRPDQ) shows a compositional bias: basic and acidic residues. The span at 2215-2241 (LSDSCQPPVSQRTVHTTLPSPSDSSHC) shows a compositional bias: polar residues. Basic and acidic residues predominate over residues 2500–2514 (DPDKEGPSQKADSES). Polar residues-rich tracts occupy residues 2515-2524 (SKNPQATAAS) and 2622-2634 (TFQS…STRG). The span at 2830 to 2848 (EDVEEQKDAEETSETEFSE) shows a compositional bias: acidic residues. Over residues 3090–3107 (RGSSQLRGSQPPCQSQKP) the composition is skewed to polar residues.

As to quaternary structure, interacts with FUZ; INTU and WDPCP; the interactors are proposed to form the core CPLANE (ciliogenesis and planar polarity effectors) complex.

It localises to the membrane. Its subcellular location is the cell projection. It is found in the cilium. Functionally, involved in ciliogenesis. Involved in the establishment of cell polarity required for directional cell migration. Proposed to act in association with the CPLANE (ciliogenesis and planar polarity effectors) complex. Involved in recruitment of peripheral IFT-A proteins to basal bodies. This Mus musculus (Mouse) protein is Ciliogenesis and planar polarity effector 1.